A 357-amino-acid polypeptide reads, in one-letter code: Protein phosphatase 1 regulatory subunit 42 (357 aa).

LRR repeat units follow at residues 29–50 (KITHINFSDRNIDSIDDLSLCR), 51–72 (NLSVLYLYDNRISQVTNLNYTT), 73–94 (NLTHLYLQNNCISCIENLSSLK), 95–116 (KLEKLYLGGNYIAVIEGLEGLE), 117–138 (ELRELHVESQRLPLGEKLLFDP), 147–168 (SLSTLNISNNNIDDIKDLEILE), and 169–190 (NLNHLIAVDNQLMHVKDLELLL). Residues 204 to 242 (NPVCLKPKYRDKLILTSKSLEFLDGKEIKDMERQFLMNW) form the LRRCT domain. The disordered stretch occupies residues 329–357 (ESSLTKNDIHEPHLLQNPKVKENLSEKKE). The segment covering 335 to 357 (NDIHEPHLLQNPKVKENLSEKKE) has biased composition (basic and acidic residues).

As to quaternary structure, interacts with PPP1CC isoform gamma-2; the interaction is direct. Interacts with actin, dynein, KIF5B, KIFC1 and tubulin. Associates with microtubules. Post-translationally, phosphorylated; during the first round of spermatogenesis with a marginal increase at 21 days after birth. Testis-specific. Expressed in spermatids (at protein level). Testis-specific.

The protein localises to the cytoplasm. It is found in the cytoskeleton. Its subcellular location is the microtubule organizing center. The protein resides in the centrosome. Regulates phosphatase activity of protein phosphatase 1 (PP1) complexes in the testis. This is Protein phosphatase 1 regulatory subunit 42 (Ppp1r42) from Mus musculus (Mouse).